Here is a 658-residue protein sequence, read N- to C-terminus: UvrABC system protein B (658 aa).

A Helicase ATP-binding domain is found at 25–182 (DSIRSGNKFN…LKLVDMGYKR (158 aa)). ATP is bound at residue 38–45 (GVTGSGKT). Residues 91–114 (YYDYYQPEAYIPRQDLFIEKDSSI) carry the Beta-hairpin motif. The Helicase C-terminal domain maps to 433 to 596 (QVEVLFDRAK…TPRSASRNLE (164 aa)). The UVR domain maps to 623-658 (AKIVKELRKQMLEAAKNLEFEKAAALRDEIAKLREL).

Belongs to the UvrB family. As to quaternary structure, forms a heterotetramer with UvrA during the search for lesions. Interacts with UvrC in an incision complex.

It is found in the cytoplasm. In terms of biological role, the UvrABC repair system catalyzes the recognition and processing of DNA lesions. A damage recognition complex composed of 2 UvrA and 2 UvrB subunits scans DNA for abnormalities. Upon binding of the UvrA(2)B(2) complex to a putative damaged site, the DNA wraps around one UvrB monomer. DNA wrap is dependent on ATP binding by UvrB and probably causes local melting of the DNA helix, facilitating insertion of UvrB beta-hairpin between the DNA strands. Then UvrB probes one DNA strand for the presence of a lesion. If a lesion is found the UvrA subunits dissociate and the UvrB-DNA preincision complex is formed. This complex is subsequently bound by UvrC and the second UvrB is released. If no lesion is found, the DNA wraps around the other UvrB subunit that will check the other stand for damage. The protein is UvrABC system protein B of Campylobacter fetus subsp. fetus (strain 82-40).